Consider the following 161-residue polypeptide: MFLMVTEFINYSEQIIRAARYIGQGLMITLSHANRLPVTIQYPYEKIISSERFRGRIHFEFDKCIACEVCVRVCPIDLPIVDWKLETDIRKKRLLNYSIDFGICIFCGNCIEYCPTNCLSMTEEYELSTYDRHELNYNLIALGRLPVSVIDDYTIRTIQIK.

4Fe-4S ferredoxin-type domains lie at 55–84 (GRIHFEFDKCIACEVCVRVCPIDLPIVDWK) and 95–124 (LNYSIDFGICIFCGNCIEYCPTNCLSMTEE). Positions 64, 67, 70, 74, 104, 107, 110, and 114 each coordinate [4Fe-4S] cluster.

Belongs to the complex I 23 kDa subunit family. In terms of assembly, NDH is composed of at least 16 different subunits, 5 of which are encoded in the nucleus. [4Fe-4S] cluster serves as cofactor.

It localises to the plastid. It is found in the chloroplast thylakoid membrane. It carries out the reaction a plastoquinone + NADH + (n+1) H(+)(in) = a plastoquinol + NAD(+) + n H(+)(out). The enzyme catalyses a plastoquinone + NADPH + (n+1) H(+)(in) = a plastoquinol + NADP(+) + n H(+)(out). NDH shuttles electrons from NAD(P)H:plastoquinone, via FMN and iron-sulfur (Fe-S) centers, to quinones in the photosynthetic chain and possibly in a chloroplast respiratory chain. The immediate electron acceptor for the enzyme in this species is believed to be plastoquinone. Couples the redox reaction to proton translocation, and thus conserves the redox energy in a proton gradient. The protein is NAD(P)H-quinone oxidoreductase subunit I, chloroplastic of Phaseolus vulgaris (Kidney bean).